Consider the following 199-residue polypeptide: Fe/S biogenesis protein NfuA (199 aa).

Residues C156 and C159 each contribute to the [4Fe-4S] cluster site.

The protein belongs to the NfuA family. Homodimer. It depends on [4Fe-4S] cluster as a cofactor.

In terms of biological role, involved in iron-sulfur cluster biogenesis. Binds a 4Fe-4S cluster, can transfer this cluster to apoproteins, and thereby intervenes in the maturation of Fe/S proteins. Could also act as a scaffold/chaperone for damaged Fe/S proteins. The polypeptide is Fe/S biogenesis protein NfuA (Actinobacillus pleuropneumoniae serotype 5b (strain L20)).